Consider the following 320-residue polypeptide: Heterogeneous nuclear ribonucleoprotein A1 (320 aa).

Residue Met1 is modified to N-acetylmethionine. N-acetylserine; in Heterogeneous nuclear ribonucleoprotein A1, N-terminally processed is present on Ser2. A Phosphoserine modification is found at Ser2. At Lys3 the chain carries N6-acetyllysine; alternate. Lys3 participates in a covalent cross-link: Glycyl lysine isopeptide (Lys-Gly) (interchain with G-Cter in SUMO2); alternate. Phosphoserine is present on residues Ser4 and Ser6. A globular A domain region spans residues 4-94; that stretch reads SESPKEPEQL…EPKRAVSRED (91 aa). Lys8 is covalently cross-linked (Glycyl lysine isopeptide (Lys-Gly) (interchain with G-Cter in SUMO2)). RRM domains are found at residues 14 to 97 and 105 to 184; these read RKLF…DSQR and KKIF…LCKQ. Ser22 carries the phosphoserine modification. A Glycyl lysine isopeptide (Lys-Gly) (interchain with G-Cter in SUMO2) cross-link involves residue Lys78. The globular B domain stretch occupies residues 95-185; the sequence is SQRPGAHLTV…EVRKALCKQE (91 aa). Lys113 is covalently cross-linked (Glycyl lysine isopeptide (Lys-Gly) (interchain with G-Cter in SUMO)). Residues Lys179 and Lys183 each participate in a glycyl lysine isopeptide (Lys-Gly) (interchain with G-Cter in SUMO2) cross-link. The tract at residues 188–216 is disordered; that stretch reads SASSSQRGRSGSGNFGGGRGGGFGGNDNF. Ser192 is subject to Phosphoserine; by MKNK2. Arg194 bears the Asymmetric dimethylarginine; alternate mark. Dimethylated arginine; alternate is present on Arg194. The residue at position 194 (Arg194) is an Omega-N-methylarginine; alternate. Residues 197–216 are compositionally biased toward gly residues; it reads SGSGNFGGGRGGGFGGNDNF. At Ser199 the chain carries Phosphoserine. Asymmetric dimethylarginine; alternate is present on residues Arg206, Arg218, Arg225, and Arg232. Arg206 bears the Dimethylated arginine; alternate mark. Residues Arg206, Arg218, Arg225, and Arg232 each carry the omega-N-methylarginine; alternate modification. An RNA-binding RGG-box region spans residues 218 to 240; that stretch reads RGGNFSGRGGFGGSRGGGGYGGS. Arg225 is modified (dimethylated arginine; alternate). Positions 268–305 are nuclear targeting sequence; sequence NQSSNFGPMKGGNFGGRSSGPYGGGGQYFAKPRNQGGY. Residues 271 to 320 are disordered; it reads SNFGPMKGGNFGGRSSGPYGGGGQYFAKPRNQGGYGGSSSSSSYGSGRRF. A compositionally biased stretch (gly residues) spans 276-294; it reads MKGGNFGGRSSGPYGGGGQ. Arg284 bears the Omega-N-methylarginine mark. The residue at position 285 (Ser285) is a Phosphoserine. Lys298 bears the N6-acetyllysine; alternate mark. Lys298 participates in a covalent cross-link: Glycyl lysine isopeptide (Lys-Gly) (interchain with G-Cter in SUMO2); alternate. At Arg300 the chain carries Omega-N-methylarginine. Residues 308–320 show a composition bias toward low complexity; it reads SSSSSSYGSGRRF. Phosphoserine is present on Ser309. A phosphoserine; by MKNK2 mark is found at Ser310, Ser311, and Ser312. Ser313 and Ser316 each carry phosphoserine. An Omega-N-methylarginine modification is found at Arg318.

As to quaternary structure, identified in the spliceosome C complex. Identified in a IGF2BP1-dependent mRNP granule complex containing untranslated mRNAs. Interacts with SEPT6. Interacts with C9orf72. Interacts with KHDRBS1. Interacts with UBQLN2. Interacts with PPIA/CYPA. Post-translationally, sumoylated.

It is found in the nucleus. The protein resides in the cytoplasm. In terms of biological role, involved in the packaging of pre-mRNA into hnRNP particles, transport of poly(A) mRNA from the nucleus to the cytoplasm and modulation of splice site selection. Plays a role in the splicing of pyruvate kinase PKM by binding repressively to sequences flanking PKM exon 9, inhibiting exon 9 inclusion and resulting in exon 10 inclusion and production of the PKM M2 isoform. Binds to the IRES and thereby inhibits the translation of the apoptosis protease activating factor APAF1. May bind to specific miRNA hairpins. The polypeptide is Heterogeneous nuclear ribonucleoprotein A1 (Hnrnpa1) (Rattus norvegicus (Rat)).